Consider the following 359-residue polypeptide: Phospho-N-acetylmuramoyl-pentapeptide-transferase (359 aa).

Helical transmembrane passes span 26 to 46 (TIYG…WVIN), 73 to 93 (TMGG…WADL), 98 to 118 (ILIT…DDYL), 134 to 154 (FLVQ…CPDF), 166 to 186 (FTPD…VGTS), 197 to 217 (GLAI…AYVA), 234 to 254 (CGEI…FLWF), 261 to 281 (VFMG…IAVI), 286 to 306 (ILLL…IIQV), and 338 to 358 (IVRF…TLKI).

The protein belongs to the glycosyltransferase 4 family. MraY subfamily. The cofactor is Mg(2+).

The protein localises to the cell inner membrane. The enzyme catalyses UDP-N-acetyl-alpha-D-muramoyl-L-alanyl-gamma-D-glutamyl-meso-2,6-diaminopimeloyl-D-alanyl-D-alanine + di-trans,octa-cis-undecaprenyl phosphate = di-trans,octa-cis-undecaprenyl diphospho-N-acetyl-alpha-D-muramoyl-L-alanyl-D-glutamyl-meso-2,6-diaminopimeloyl-D-alanyl-D-alanine + UMP. It participates in cell wall biogenesis; peptidoglycan biosynthesis. Catalyzes the initial step of the lipid cycle reactions in the biosynthesis of the cell wall peptidoglycan: transfers peptidoglycan precursor phospho-MurNAc-pentapeptide from UDP-MurNAc-pentapeptide onto the lipid carrier undecaprenyl phosphate, yielding undecaprenyl-pyrophosphoryl-MurNAc-pentapeptide, known as lipid I. The protein is Phospho-N-acetylmuramoyl-pentapeptide-transferase of Desulforapulum autotrophicum (strain ATCC 43914 / DSM 3382 / VKM B-1955 / HRM2) (Desulfobacterium autotrophicum).